Here is a 113-residue protein sequence, read N- to C-terminus: uncharacterized protein (113 aa).

2 disordered regions span residues 1–22 and 90–113; these read MGEH…PLAQ and DGRH…SDDL. The span at 90–99 shows a compositional bias: basic and acidic residues; the sequence is DGRHTTESSF. Residues 100-113 are compositionally biased toward low complexity; that stretch reads EHSSPSRSPQSDDL.

This is an uncharacterized protein from Mycobacterium tuberculosis (strain ATCC 25618 / H37Rv).